The following is a 258-amino-acid chain: DNA repair protein RecO (258 aa).

Belongs to the RecO family.

Functionally, involved in DNA repair and RecF pathway recombination. The chain is DNA repair protein RecO from Lactiplantibacillus plantarum (strain ATCC BAA-793 / NCIMB 8826 / WCFS1) (Lactobacillus plantarum).